We begin with the raw amino-acid sequence, 192 residues long: Protein GrpE (192 aa).

Over residues 1 to 20 (MEERNEQVVEEVKEEVKEAQ) the composition is skewed to basic and acidic residues. The tract at residues 1–34 (MEERNEQVVEEVKEEVKEAQVEEAVTSEDSEETV) is disordered. A compositionally biased stretch (acidic residues) spans 25-34 (VTSEDSEETV).

This sequence belongs to the GrpE family. Homodimer.

It localises to the cytoplasm. In terms of biological role, participates actively in the response to hyperosmotic and heat shock by preventing the aggregation of stress-denatured proteins, in association with DnaK and GrpE. It is the nucleotide exchange factor for DnaK and may function as a thermosensor. Unfolded proteins bind initially to DnaJ; upon interaction with the DnaJ-bound protein, DnaK hydrolyzes its bound ATP, resulting in the formation of a stable complex. GrpE releases ADP from DnaK; ATP binding to DnaK triggers the release of the substrate protein, thus completing the reaction cycle. Several rounds of ATP-dependent interactions between DnaJ, DnaK and GrpE are required for fully efficient folding. This is Protein GrpE from Bacillus cereus (strain AH187).